Here is a 289-residue protein sequence, read N- to C-terminus: NAD kinase (289 aa).

Asp63 acts as the Proton acceptor in catalysis. NAD(+) contacts are provided by residues 63–64 (DG), Arg68, 138–139 (ND), Arg149, Asp168, 179–184 (TGYSLS), and Gln238.

Belongs to the NAD kinase family. It depends on a divalent metal cation as a cofactor.

The protein localises to the cytoplasm. The catalysed reaction is NAD(+) + ATP = ADP + NADP(+) + H(+). Its function is as follows. Involved in the regulation of the intracellular balance of NAD and NADP, and is a key enzyme in the biosynthesis of NADP. Catalyzes specifically the phosphorylation on 2'-hydroxyl of the adenosine moiety of NAD to yield NADP. This is NAD kinase from Gemmatimonas aurantiaca (strain DSM 14586 / JCM 11422 / NBRC 100505 / T-27).